Reading from the N-terminus, the 330-residue chain is Probable transposase for insertion sequence element ISH11 (330 aa).

The protein belongs to the transposase 11 family.

In terms of biological role, involved in the transposition of the insertion sequence ISH11. This is Probable transposase for insertion sequence element ISH11 from Halobacterium salinarum (strain ATCC 29341 / DSM 671 / R1).